Here is a 562-residue protein sequence, read N- to C-terminus: Apyrase (562 aa).

The first 24 residues, 1–24, serve as a signal peptide directing secretion; sequence MAGRPGYSEVIFLYVVSVAVIARA. Residues D47, H49, and D98 each coordinate a divalent metal cation. A glycan (N-linked (GlcNAc...) asparagine) is linked at N112. N130, H233, and H257 together coordinate a divalent metal cation. R370 provides a ligand contact to AMP. N-linked (GlcNAc...) asparagine glycosylation is present at N390. Positions 405, 424, and 514 each coordinate AMP.

This sequence belongs to the 5'-nucleotidase family. As to quaternary structure, (Microbial infection) Interacts with Zika virus envelope protein E and Zika virus-like particles; the interaction does not affect Zika virus replication in human endothelial cells and keratinocytes. Requires a divalent metal cation as cofactor. In terms of processing, the N-terminus is blocked. In terms of tissue distribution, female saliva (at protein level). Female salivary gland (at protein level). Not detected or low-level expression in female carcasses without salivary glands. Not detected in male tissues.

The protein resides in the secreted. It catalyses the reaction a ribonucleoside 5'-triphosphate + 2 H2O = a ribonucleoside 5'-phosphate + 2 phosphate + 2 H(+). Functionally, facilitates hematophagy by preventing ADP-, collagen- and thrombin-dependent platelet aggregation in the host. Cleaves adenosine triphosphate (ATP) and adenosine diphosphate (ADP) to adenosine monophosphate (AMP) and inorganic phosphate. May reduce probing time by facilitating the speed of locating blood. (Microbial infection) Does not affect Zika virus replication in human endothelial cells and keratinocytes. This is Apyrase from Aedes aegypti (Yellowfever mosquito).